The sequence spans 297 residues: Aspartate carbamoyltransferase catalytic subunit (297 aa).

Carbamoyl phosphate is bound by residues Arg-51 and Thr-52. Lys-79 serves as a coordination point for L-aspartate. Residues Arg-101, His-129, and Gln-132 each contribute to the carbamoyl phosphate site. Positions 162 and 216 each coordinate L-aspartate. Residues Gly-257 and Pro-258 each coordinate carbamoyl phosphate.

It belongs to the aspartate/ornithine carbamoyltransferase superfamily. ATCase family. As to quaternary structure, heterododecamer (2C3:3R2) of six catalytic PyrB chains organized as two trimers (C3), and six regulatory PyrI chains organized as three dimers (R2).

It carries out the reaction carbamoyl phosphate + L-aspartate = N-carbamoyl-L-aspartate + phosphate + H(+). It participates in pyrimidine metabolism; UMP biosynthesis via de novo pathway; (S)-dihydroorotate from bicarbonate: step 2/3. Functionally, catalyzes the condensation of carbamoyl phosphate and aspartate to form carbamoyl aspartate and inorganic phosphate, the committed step in the de novo pyrimidine nucleotide biosynthesis pathway. The sequence is that of Aspartate carbamoyltransferase catalytic subunit from Myxococcus xanthus (strain DK1622).